The primary structure comprises 305 residues: MLDTQIQELIIKWQKYLSLQKNYSNHTLISYNNDLKHFLEFMNYYNSDIVTMDYIKAADIRLMRSWLAKRKCDNFVTSSIARGLSAIKNFYKFLEKTAELHNHVVFSIKSPKKSKLLPKALSEEEVNISLDHIEEYGNSQWIEIRNKALLVLIYASGLRISEALSITKLHLQNLEFIKIMGKGSKERVIPWLAIARNLITEYLEKLPYELKDDEPIFRGKQGKKLQPPVFNRELIKLKRFYGLPEHLSAHSFRHSFASHLLENGADLRSIQELLGHKSLSTTQSYTKTSIKHLETAYVTAHPIKK.

A Core-binding (CB) domain is found at 4–95 (TQIQELIIKW…AIKNFYKFLE (92 aa)). Positions 116–298 (LLPKALSEEE…SIKHLETAYV (183 aa)) constitute a Tyr recombinase domain. Active-site residues include Arg-159, Lys-182, His-250, Arg-253, and His-276. Residue Tyr-285 is the O-(3'-phospho-DNA)-tyrosine intermediate of the active site.

This sequence belongs to the 'phage' integrase family. XerC subfamily. As to quaternary structure, forms a cyclic heterotetrameric complex composed of two molecules of XerC and two molecules of XerD.

It is found in the cytoplasm. Site-specific tyrosine recombinase, which acts by catalyzing the cutting and rejoining of the recombining DNA molecules. The XerC-XerD complex is essential to convert dimers of the bacterial chromosome into monomers to permit their segregation at cell division. It also contributes to the segregational stability of plasmids. This chain is Tyrosine recombinase XerC, found in Rickettsia bellii (strain OSU 85-389).